The chain runs to 147 residues: MVHLTGEEKAAVTGLWSKVNVDEVGGEALGRLLVVYPWTQRFFDSFGDLSTPDAVMNNPKVKAHGKKVLNSFSEGLKNLDNLKGTFAKLSELHCDKLHVDPENFKLLGNVLVCVLAHHFGKEFTPQVQAAYQKVVAGVANALAHKYH.

N-acetylvaline is present on Val-2. In terms of domain architecture, Globin spans 3–147 (HLTGEEKAAV…VANALAHKYH (145 aa)). A Phosphothreonine modification is found at Thr-13. Ser-45 bears the Phosphoserine mark. Lys-60 is modified (N6-acetyllysine). A heme b-binding site is contributed by His-64. Lys-83 carries the post-translational modification N6-acetyllysine. Position 93 (His-93) interacts with heme b. Cys-94 carries the post-translational modification S-nitrosocysteine. At Lys-145 the chain carries N6-acetyllysine.

This sequence belongs to the globin family. In terms of assembly, heterotetramer of two alpha chains and two beta chains. As to expression, red blood cells.

Functionally, involved in oxygen transport from the lung to the various peripheral tissues. The chain is Hemoglobin subunit beta (HBB) from Ailuropoda melanoleuca (Giant panda).